The following is a 346-amino-acid chain: D-alanine--D-alanine ligase (346 aa).

In terms of domain architecture, ATP-grasp spans 134–340 (KFLAESLGVK…IDYTYIHSIQ (207 aa)). Position 161–212 (161–212 (EYPVIIKPVRLGSSIGVSIVKSEAELDYALDVAFEFDNDVIVEPFIDGVKEF)) interacts with ATP. Asp-284, Glu-296, and Asn-298 together coordinate Mg(2+).

It belongs to the D-alanine--D-alanine ligase family. The cofactor is Mg(2+). Mn(2+) is required as a cofactor.

It is found in the cytoplasm. The catalysed reaction is 2 D-alanine + ATP = D-alanyl-D-alanine + ADP + phosphate + H(+). It functions in the pathway cell wall biogenesis; peptidoglycan biosynthesis. Its function is as follows. Cell wall formation. This Sulfurovum sp. (strain NBC37-1) protein is D-alanine--D-alanine ligase.